A 363-amino-acid polypeptide reads, in one-letter code: Phosphatidylinositol transfer protein sfh-5 (363 aa).

Positions 1-84 (MSTQPSDSAE…SPADIKDSVS (84 aa)) are disordered. Basic and acidic residues predominate over residues 36-46 (DAAKHAEEEPK). A compositionally biased stretch (low complexity) spans 64-76 (KPAAAPAQEADSP). One can recognise a CRAL-TRIO domain in the interval 180–354 (AGDEPAVDEP…EYGGKGADLK (175 aa)). Heme is bound by residues Tyr-200, Arg-220, His-253, Tyr-255, and Lys-289.

Belongs to the SFH5 family. Heme b is required as a cofactor.

The protein resides in the cytoplasm. Its subcellular location is the endoplasmic reticulum membrane. It localises to the microsome membrane. The enzyme catalyses a 1,2-diacyl-sn-glycero-3-phospho-(1D-myo-inositol)(in) = a 1,2-diacyl-sn-glycero-3-phospho-(1D-myo-inositol)(out). Functionally, non-classical phosphatidylinositol (PtdIns) transfer protein (PITP), which exhibits PtdIns-binding/transfer activity in the absence of detectable PtdCho-binding/transfer activity. Regulates PtdIns(4,5)P2 homeostasis at the plasma membrane. Heme-binding protein that may play a role in organic oxidant-induced stress responses. The protein is Phosphatidylinositol transfer protein sfh-5 (sfh-5) of Neurospora crassa (strain ATCC 24698 / 74-OR23-1A / CBS 708.71 / DSM 1257 / FGSC 987).